A 511-amino-acid chain; its full sequence is Histidine ammonia-lyase (511 aa).

The 5-imidazolinone (Ala-Gly) cross-link spans 143-145; that stretch reads ASG. The residue at position 144 (S144) is a 2,3-didehydroalanine (Ser).

It belongs to the PAL/histidase family. Post-translationally, contains an active site 4-methylidene-imidazol-5-one (MIO), which is formed autocatalytically by cyclization and dehydration of residues Ala-Ser-Gly.

The protein localises to the cytoplasm. The catalysed reaction is L-histidine = trans-urocanate + NH4(+). It participates in amino-acid degradation; L-histidine degradation into L-glutamate; N-formimidoyl-L-glutamate from L-histidine: step 1/3. In Vibrio cholerae serotype O1 (strain ATCC 39315 / El Tor Inaba N16961), this protein is Histidine ammonia-lyase.